Here is a 906-residue protein sequence, read N- to C-terminus: MTAVHAGNINFKWDPKSLEIRTLAVERLLEPLVTQVTTLVNTNSKGPSNKKRGRSKKAHVLAASVEQATENFLEKGDKIAKESQFLKEELVAAVEDVRKQGDLMKAAAGEFADDPCSSVKRGNMVRAARALLSAVTRLLILADMADVYKLLVQLKVVEDGILKLRNAGNEQDLGIQYKALKPEVDKLNIMAAKRQQELKDVGHRDQMAAARGILQKNVPILYTASQACLQHPDVAAYKANRDLIYKQLQQAVTGISNAAQATASDDASQHQGGGGGELAYALNNFDKQIIVDPLSFSEERFRPSLEERLESIISGAALMADSSCTRDDRRERIVAECNAVRQALQDLLSEYMGNAGRKERSDALNSAIDKMTKKTRDLRRQLRKAVMDHVSDSFLETNVPLLVLIEAAKNGNEKEVKEYAQVFREHANKLIEVANLACSISNNEEGVKLVRMSASQLEALCPQVINAALALAAKPQSKLAQENMDLFKEQWEKQVRVLTDAVDDITSIDDFLAVSENHILEDVNKCVIALQEKDVDGLDRTAGAIRGRAARVIHVVTSEMDNYEPGVYTEKVLEATKLLSNTVMPRFTEQVEAAVEALSSDPAQPMDENEFIDASRLVYDGIRDIRKAVLMIRTPEELDDSDFETEDFDVRSRTSVQTEDDQLIAGQSARAIMAQLPQEQKAKIAEQVASFQEEKSKLDAEVSKWDDSGNDIIVLAKQMCMIMMEMTDFTRGKGPLKNTSDVISAAKKIAEAGSRMDKLGRTIADHCPDSACKQDLLAYLQRIALYCHQLNICSKVKAEVQNLGGELVVSGVDSAMSLIQAAKNLMNAVVQTVKASYVASTKYQKSQGMASLNLPAVSWKMKAPEKKPLVKREKQDETQTKIKRASQKKHVNPVQALSEFKAMDSI.

Residue Thr2 is modified to N-acetylthreonine. Residues 2–228 form an involved in homodimerization region; the sequence is TAVHAGNINF…PILYTASQAC (227 aa). A Glycyl lysine isopeptide (Lys-Gly) (interchain with G-Cter in SUMO2) cross-link involves residue Lys57. The tract at residues 97-148 is interaction with JUP and CTNNB1; sequence VRKQGDLMKAAAGEFADDPCSSVKRGNMVRAARALLSAVTRLLILADMADVY. Residues Ser264, Ser268, Ser295, and Ser297 each carry the phosphoserine modification. An interaction with alpha-actinin region spans residues 325 to 394; the sequence is TRDDRRERIV…AVMDHVSDSF (70 aa). Thr634 is modified (phosphothreonine). At Ser641 the chain carries Phosphoserine; by CK2. Position 645 is a phosphothreonine (Thr645). Ser652 and Ser655 each carry phosphoserine; by CK1. A Phosphothreonine; by CK1 modification is found at Thr658. Residue Lys797 forms a Glycyl lysine isopeptide (Lys-Gly) (interchain with G-Cter in SUMO2) linkage. Position 851 is a phosphoserine (Ser851). Over residues 864–880 the composition is skewed to basic and acidic residues; the sequence is PEKKPLVKREKQDETQT. Residues 864 to 894 form a disordered region; that stretch reads PEKKPLVKREKQDETQTKIKRASQKKHVNPV. Residues 881–891 are compositionally biased toward basic residues; the sequence is KIKRASQKKHV.

This sequence belongs to the vinculin/alpha-catenin family. In terms of assembly, monomer and homodimer; the monomer preferentially binds to CTNNB1 and the homodimer to actin. Component of an cadherin:catenin adhesion complex composed of at least of CDH26, beta-catenin/CTNNB1, alpha-catenin/CTNNA1 and p120 catenin/CTNND1. Possible component of an E-cadherin/ catenin adhesion complex together with E-cadherin/CDH1 and beta-catenin/CTNNB1 or gamma-catenin/JUP; the complex is located to adherens junctions. The stable association of CTNNA1 is controversial as CTNNA1 was shown not to bind to F-actin when assembled in the complex. Alternatively, the CTNNA1-containing complex may be linked to F-actin by other proteins such as LIMA1. Binds AFDN and F-actin. Interacts with ARHGAP21. Interacts with AJUBA. Interacts with LIMA1. Interacts with vinculin/VCL. Interacts with TJP2/ZO2 (via N-terminus). Interacts with TJP1/ZO1 (via N-terminus). Post-translationally, sumoylated. In terms of processing, phosphorylation seems to contribute to the strength of cell-cell adhesion rather than to the basic capacity for cell-cell adhesion. In terms of tissue distribution, ubiquitously expressed in normal tissues. Abundantly expressed in brain and cerebellum, also expressed in the placenta, liver, lung, colon, heart, pancreas, stomach and thymus.

Its subcellular location is the cytoplasm. The protein localises to the cytoskeleton. It localises to the cell junction. It is found in the adherens junction. The protein resides in the cell membrane. Its subcellular location is the nucleus. In terms of biological role, associates with the cytoplasmic domain of a variety of cadherins. The association of catenins to cadherins produces a complex which is linked to the actin filament network, and which seems to be of primary importance for cadherins cell-adhesion properties. Can associate with both E- and N-cadherins. Originally believed to be a stable component of E-cadherin/catenin adhesion complexes and to mediate the linkage of cadherins to the actin cytoskeleton at adherens junctions. In contrast, cortical actin was found to be much more dynamic than E-cadherin/catenin complexes and CTNNA1 was shown not to bind to F-actin when assembled in the complex suggesting a different linkage between actin and adherens junctions components. The homodimeric form may regulate actin filament assembly and inhibit actin branching by competing with the Arp2/3 complex for binding to actin filaments. Involved in the regulation of WWTR1/TAZ, YAP1 and TGFB1-dependent SMAD2 and SMAD3 nuclear accumulation. May play a crucial role in cell differentiation. The chain is Catenin alpha-1 from Homo sapiens (Human).